The following is a 116-amino-acid chain: Large ribosomal subunit protein bL19 (116 aa).

This sequence belongs to the bacterial ribosomal protein bL19 family.

This protein is located at the 30S-50S ribosomal subunit interface and may play a role in the structure and function of the aminoacyl-tRNA binding site. This chain is Large ribosomal subunit protein bL19, found in Magnetococcus marinus (strain ATCC BAA-1437 / JCM 17883 / MC-1).